We begin with the raw amino-acid sequence, 305 residues long: Protoheme IX farnesyltransferase 2 (305 aa).

7 helical membrane-spanning segments follow: residues 38–58 (LITTFTGMWLALHISGLSFLG), 60–80 (LNTVLLTLIGSSLIIAGSCAV), 115–135 (ILLIALGLIMLLMTTVMAAVI), 157–177 (INTVVGSVSGAVPPLIGWTAV), 181–201 (IGVVAWVLFMILFIWQIPHFL), 236–256 (VACLLPLPFFLGSLGLPIVIL), and 285–305 (FVYSLNYMTIYFVAMVVFTLF).

It belongs to the UbiA prenyltransferase family. Protoheme IX farnesyltransferase subfamily. In terms of assembly, interacts with CtaA.

Its subcellular location is the cell membrane. The catalysed reaction is heme b + (2E,6E)-farnesyl diphosphate + H2O = Fe(II)-heme o + diphosphate. It participates in porphyrin-containing compound metabolism; heme O biosynthesis; heme O from protoheme: step 1/1. Functionally, converts heme B (protoheme IX) to heme O by substitution of the vinyl group on carbon 2 of heme B porphyrin ring with a hydroxyethyl farnesyl side group. The sequence is that of Protoheme IX farnesyltransferase 2 from Bacillus velezensis (strain DSM 23117 / BGSC 10A6 / LMG 26770 / FZB42) (Bacillus amyloliquefaciens subsp. plantarum).